The sequence spans 237 residues: Ras-related protein RABA3 (237 aa).

35–42 (GDSAVGKT) serves as a coordination point for GTP. The Effector region motif lies at 57–65 (SKSTIGVEF). GTP is bound by residues 83 to 87 (DTAGQ), 141 to 144 (NKAD), and 172 to 173 (SA). 2 S-geranylgeranyl cysteine lipidation sites follow: Cys-235 and Cys-237. Cys-237 carries the post-translational modification Cysteine methyl ester.

It belongs to the small GTPase superfamily. Rab family. Expressed in root tips.

The protein resides in the endosome membrane. The protein localises to the golgi apparatus. It localises to the trans-Golgi network membrane. Intracellular vesicle trafficking and protein transport. The chain is Ras-related protein RABA3 (RABA3) from Arabidopsis thaliana (Mouse-ear cress).